The following is a 139-amino-acid chain: MEKNSSSPKIRALAKHIRMSTHRARRVIDQVRNRSYEQALMILELMPYRACYPILQLISSAAANANHNIGLNKANLFVSRAEVNEGAILKRSQPRAQGRGYPIQKPTCHITIVLEERSRSNNLIMPTEPKKGKYVWDRK.

Belongs to the universal ribosomal protein uL22 family. As to quaternary structure, part of the 50S ribosomal subunit.

It localises to the plastid. Its subcellular location is the chloroplast. In terms of biological role, this protein binds specifically to 23S rRNA. The globular domain of the protein is located near the polypeptide exit tunnel on the outside of the subunit, while an extended beta-hairpin is found that lines the wall of the exit tunnel in the center of the 70S ribosome. This is Large ribosomal subunit protein uL22c (rpl22) from Cycas taitungensis (Prince sago).